Consider the following 312-residue polypeptide: Nicotinamide adenine dinucleotide transporter 1, chloroplastic (312 aa).

3 Solcar repeats span residues 11–103, 111–199, and 211–299; these read KNVL…LKSF, LSVG…IKVY, and LNAR…VHRF. 6 consecutive transmembrane segments (helical) span residues 17-37, 78-98, 117-137, 171-191, 216-232, and 271-293; these read AAAG…LDVI, GLSP…TMYD, VLAA…LWVV, GLYS…IQFP, VAVA…TLTY, and FYRG…FTSF.

It belongs to the mitochondrial carrier (TC 2.A.29) family. In terms of tissue distribution, highly expressed in young leaf mesophyll cells, root tips and at the branches of adventitious roots. Low expression in all flower tissues and not detected in siliques and seeds.

It is found in the plastid. The protein localises to the chloroplast membrane. With respect to regulation, inhibited by pyridoxal 5'-phosphate, bathophenanthroline, tannic acid, mersalyl, mercuric chloride, p-hydroxymercuribenzoate, p-hydroxymercuribenzoate sulfonate, bromocresol purple and N-ethylmaleimide. Its function is as follows. Mediates the NAD(+) import into chloroplast. Favors the NAD(+)(in)/ADP or AMP(out) antiport exchange, but is also able to catalyze a low unidirectional transport (uniport) of NAD(+). Transports NAD(+), nicotinic acid adenine dinucleotide, nicotinamide mononucleotide, nicotinic acid mononucleotide, FAD, FMN, TTP, TDP, TMP, UTP, UDP, UMP, CTP, CDP, CMP, GTP, GDP, GMP, 3'-AMP, ATP, ADP, and AMP, has low transport activity with cAMP, pyrophosphate, NADH and alpha-NAD(+), and has no activity with NADP(+), NADPH, nicotinamide, nicotinic acid, adenosine, thiamine mono- or diphosphate, inorganic phosphate, CoA, folate, NaCl, malate, malonate, citrate, fumarate, aspartate, glutamate, S-adenosylmethionine, lysine, arginine, and ornithine. The sequence is that of Nicotinamide adenine dinucleotide transporter 1, chloroplastic (NDT1) from Arabidopsis thaliana (Mouse-ear cress).